A 295-amino-acid polypeptide reads, in one-letter code: MQHYHFSHSLLAQQEKPYRFPCPAKLNLFLYINGKRQDGYHELQTLFQFVDFGDWLDIEVREDNEICLTPELPSLKNEDNLVYRAAKLLQQKTNCALGANLTLDKILPMGSGLGGGSSNAATALVALNYLWNTQLSTKQLAKLGLMLGADVPIFVHGHAAFAEGVGEKITYCEPKEKWYVVLKPNVSISTATVFSDPDLIRNTPKQSLEQLLNQKYANDCEKVVLNHYPEVEEILHRLLQYAPSRLTGTGACVFAEFNDEESAQLAFQTIPKNYFGFVAQGLNKSPLHNMLAKIS.

The active site involves Lys25. 108–118 lines the ATP pocket; the sequence is PMGSGLGGGSS. Asp150 is an active-site residue.

This sequence belongs to the GHMP kinase family. IspE subfamily.

It carries out the reaction 4-CDP-2-C-methyl-D-erythritol + ATP = 4-CDP-2-C-methyl-D-erythritol 2-phosphate + ADP + H(+). It participates in isoprenoid biosynthesis; isopentenyl diphosphate biosynthesis via DXP pathway; isopentenyl diphosphate from 1-deoxy-D-xylulose 5-phosphate: step 3/6. Catalyzes the phosphorylation of the position 2 hydroxy group of 4-diphosphocytidyl-2C-methyl-D-erythritol. This is 4-diphosphocytidyl-2-C-methyl-D-erythritol kinase from Pasteurella multocida (strain Pm70).